Here is a 1015-residue protein sequence, read N- to C-terminus: DNA polymerase catalytic subunit (1015 aa).

The protein belongs to the DNA polymerase type-B family. Forms a complex with the major DNA-binding protein BALF2, the DNA polymerase processivity factor BMRF1, and the alkaline exonuclease BGLF5. Interacts with the putative helicase-primase complex composed of BBLF4, BSLF1 and BBLF2/3 proteins; these interactions may coordinate leading and lagging strand DNA synthesis at the replication fork.

It is found in the host nucleus. It carries out the reaction DNA(n) + a 2'-deoxyribonucleoside 5'-triphosphate = DNA(n+1) + diphosphate. Functionally, replicates viral genomic DNA in the late phase of lytic infection, producing long concatemeric DNA. The replication complex is composed of six viral proteins: the DNA polymerase, processivity factor, primase, primase-associated factor, helicase, and ssDNA-binding protein. The protein is DNA polymerase catalytic subunit of Homo sapiens (Human).